A 1332-amino-acid polypeptide reads, in one-letter code: Xanthine dehydrogenase/oxidase (1332 aa).

Positions 4–91 (DELVFFVNGK…HVAVTTVEGI (88 aa)) constitute a 2Fe-2S ferredoxin-type domain. The [2Fe-2S] cluster site is built by Cys-43, Cys-48, Cys-51, Cys-73, Cys-113, Cys-116, Cys-148, and Cys-150. An FAD-binding PCMH-type domain is found at 229–414 (FEGERVTWIQ…LSIEIPYSRE (186 aa)). FAD-binding positions include 257–264 (LVVGNTEI), Phe-337, 347–351 (SLGGN), Asp-360, Leu-404, and Lys-422. Cys-535 and Cys-992 are oxidised to a cystine. Gln-767 and Phe-798 together coordinate Mo-molybdopterin. 2 residues coordinate substrate: Glu-802 and Arg-880. A Mo-molybdopterin-binding site is contributed by Arg-912. Substrate-binding residues include Phe-914 and Thr-1010. Ala-1079 provides a ligand contact to Mo-molybdopterin. Glu-1261 serves as the catalytic Proton acceptor.

The protein belongs to the xanthine dehydrogenase family. In terms of assembly, homodimer. Interacts with BTN1A1. [2Fe-2S] cluster serves as cofactor. Requires FAD as cofactor. Mo-molybdopterin is required as a cofactor. In terms of processing, subject to partial proteolysis; this alters the enzyme from the dehydrogenase form (D) to the oxidase form (O). Post-translationally, contains sulfhydryl groups that are easily oxidized (in vitro); this alters the enzyme from the dehydrogenase form (D) to the oxidase form (O). Detected in milk (at protein level).

It is found in the cytoplasm. The protein resides in the peroxisome. It localises to the secreted. The enzyme catalyses xanthine + NAD(+) + H2O = urate + NADH + H(+). It carries out the reaction hypoxanthine + NAD(+) + H2O = xanthine + NADH + H(+). It catalyses the reaction xanthine + O2 + H2O = urate + H2O2. Its activity is regulated as follows. Can be converted from the dehydrogenase form (D) to the oxidase form (O) irreversibly by proteolysis or reversibly through the oxidation of sulfhydryl groups. In terms of biological role, key enzyme in purine degradation. Catalyzes the oxidation of hypoxanthine to xanthine. Catalyzes the oxidation of xanthine to uric acid. Contributes to the generation of reactive oxygen species. The chain is Xanthine dehydrogenase/oxidase (XDH) from Bos taurus (Bovine).